A 46-amino-acid polypeptide reads, in one-letter code: Bacteriocin acidocin 8912 (46 aa).

The propeptide occupies 1 to 20; sequence MISSHQKTLTDKELALISGG.

It localises to the secreted. In terms of biological role, has a bactericidal effect on sensitive cells but not a bacteriolytic effect. The polypeptide is Bacteriocin acidocin 8912 (acdT) (Lactobacillus acidophilus).